A 376-amino-acid polypeptide reads, in one-letter code: Alcohol dehydrogenase class-3 (376 aa).

Zn(2+)-binding residues include Cys-40, His-62, Cys-92, Cys-95, Cys-98, Cys-106, and Cys-170.

This sequence belongs to the zinc-containing alcohol dehydrogenase family. Class-III subfamily. As to quaternary structure, homodimer. Requires Zn(2+) as cofactor.

The protein resides in the cytoplasm. The enzyme catalyses a primary alcohol + NAD(+) = an aldehyde + NADH + H(+). It carries out the reaction a secondary alcohol + NAD(+) = a ketone + NADH + H(+). The catalysed reaction is S-(hydroxymethyl)glutathione + NADP(+) = S-formylglutathione + NADPH + H(+). It catalyses the reaction S-(hydroxymethyl)glutathione + NAD(+) = S-formylglutathione + NADH + H(+). Functionally, oxidizes long-chain aliphatic alcohols, long-chain hydroxylated fatty acids and S-hydroxymethylglutathione (hmGSH) in increasing order of preference. Shows little or no activity with short-chain aliphatic alcohols. This Cereibacter sphaeroides (strain ATCC 17023 / DSM 158 / JCM 6121 / CCUG 31486 / LMG 2827 / NBRC 12203 / NCIMB 8253 / ATH 2.4.1.) (Rhodobacter sphaeroides) protein is Alcohol dehydrogenase class-3 (adhI).